Consider the following 477-residue polypeptide: ATP synthase subunit beta (477 aa).

155–162 lines the ATP pocket; sequence GGAGVGKT.

It belongs to the ATPase alpha/beta chains family. As to quaternary structure, F-type ATPases have 2 components, CF(1) - the catalytic core - and CF(0) - the membrane proton channel. CF(1) has five subunits: alpha(3), beta(3), gamma(1), delta(1), epsilon(1). CF(0) has three main subunits: a(1), b(2) and c(9-12). The alpha and beta chains form an alternating ring which encloses part of the gamma chain. CF(1) is attached to CF(0) by a central stalk formed by the gamma and epsilon chains, while a peripheral stalk is formed by the delta and b chains.

It localises to the cell inner membrane. The catalysed reaction is ATP + H2O + 4 H(+)(in) = ADP + phosphate + 5 H(+)(out). Functionally, produces ATP from ADP in the presence of a proton gradient across the membrane. The catalytic sites are hosted primarily by the beta subunits. This chain is ATP synthase subunit beta, found in Mesorhizobium japonicum (strain LMG 29417 / CECT 9101 / MAFF 303099) (Mesorhizobium loti (strain MAFF 303099)).